A 765-amino-acid chain; its full sequence is MSVALQELGGGGNMVEYKRATLRDEDAPETPVEGGASPDAVEAGFRKRTSRLLGLHTQLELVLAGVSLLLAALLLGCLVALGVQYHRDPSHSTCLTEACIRVAGKILESLDRGVSPCEDFYQFSCGGWIRRNPLPDGRSRWNTFNSLWDQNQAILKHLLENTTFNSSSEAERKTQRFYLSCLQVERIEELGAQPLRDLIDKIGGWNVTGPWDQDNFMEVLKAVAGTYRATPFFTVYVSADSKSSNSNIIQVDQSGLFLPSRDYYLNRTANEKVLTAYLDYMEELGMLLGGQPTSTREQMRQVLELEIQLANITVPQDQRRDEEKIYHKMSIAELQALAPSMDWLEFLSFLLSPLELGDSEPVVVYGTDYLQQVSELINRTEPSVLNNYLIWNLVQKTTSSLDHRFESAQEKLLETLYGTKKSCTPRWQTCISNTDDALGFALGSLFVKATFDRQSKEIAEGMISEIRAAFEEALGHLVWMDEKTRQAAKEKADAIYDMIGFPDFILEPKELDDVYDGYEVSEDSFFQNMLNLYNFSAKVMADQLRKPPSRDQWSMTPQTVNAYYLPTKNEIVFPAGILQAPFYTCNHPKALNFGGIGVVMGHELTHAFDDQGREYDKEGNLRPWWQNESLAAFRNHTACIEEQYSQYQVNGEKLNGRQTLGENIADNGGLKAAYNAYKAWLRKHGEEQQLPAVGLTNHQLFFVGFAQVWCSVRTPESSHEGLVTDPHSPARFRVLGTLSNSRDFLRHFGCPVGSPMNSGQLCEVW.

The Cytoplasmic segment spans residues 1 to 60 (MSVALQELGGGGNMVEYKRATLRDEDAPETPVEGGASPDAVEAGFRKRTSRLLGLHTQLE). Residues 61–81 (LVLAGVSLLLAALLLGCLVAL) form a helical; Signal-anchor for type II membrane protein membrane-spanning segment. Residues 82-765 (GVQYHRDPSH…MNSGQLCEVW (684 aa)) lie on the Lumenal side of the membrane. A Peptidase M13 domain is found at 93–765 (TCLTEACIRV…MNSGQLCEVW (673 aa)). 5 disulfides stabilise this stretch: cysteine 94–cysteine 99, cysteine 117–cysteine 750, cysteine 125–cysteine 710, cysteine 181–cysteine 430, and cysteine 639–cysteine 762. Asparagine 161, asparagine 165, asparagine 206, asparagine 266, asparagine 311, asparagine 378, and asparagine 534 each carry an N-linked (GlcNAc...) asparagine glycan. Residue histidine 602 coordinates Zn(2+). Glutamate 603 is a catalytic residue. Histidine 606 lines the Zn(2+) pocket. 2 N-linked (GlcNAc...) asparagine glycosylation sites follow: asparagine 627 and asparagine 635. Glutamate 662 lines the Zn(2+) pocket. Aspartate 666 serves as the catalytic Proton donor.

Belongs to the peptidase M13 family. Requires Zn(2+) as cofactor. Isoform ECE2-1 and isoform ECE2-2 are expressed in brain and adrenal gland.

The protein resides in the golgi apparatus membrane. It is found in the cytoplasmic vesicle. Its subcellular location is the secretory vesicle membrane. It carries out the reaction Hydrolysis of the 21-Trp-|-Val-22 bond in big endothelin to form endothelin 1.. Converts big endothelin-1 to endothelin-1. Also involved in the processing of various neuroendocrine peptides, including neurotensin, angiotensin I, substance P, proenkephalin-derived peptides, and prodynorphin-derived peptides. May play a role in amyloid-beta processing. This Bos taurus (Bovine) protein is Endothelin-converting enzyme 2.